Reading from the N-terminus, the 452-residue chain is Probable phosphoglucosamine mutase (452 aa).

The active-site Phosphoserine intermediate is the Ser96. Residues Ser96, Asp235, Asp237, and Asp239 each coordinate Mg(2+). Residue Ser96 is modified to Phosphoserine.

Belongs to the phosphohexose mutase family. Mg(2+) is required as a cofactor. Activated by phosphorylation.

It catalyses the reaction alpha-D-glucosamine 1-phosphate = D-glucosamine 6-phosphate. Its function is as follows. Catalyzes the conversion of glucosamine-6-phosphate to glucosamine-1-phosphate. This Methanopyrus kandleri (strain AV19 / DSM 6324 / JCM 9639 / NBRC 100938) protein is Probable phosphoglucosamine mutase.